The sequence spans 347 residues: 3-isopropylmalate dehydrogenase (347 aa).

An NAD(+)-binding site is contributed by 76–87 (GPKWTDPNNRPE). Residues Arg-94, Arg-104, Arg-132, and Asp-217 each contribute to the substrate site. Mg(2+)-binding residues include Asp-217, Asp-241, and Asp-245. NAD(+) is bound at residue 275–287 (GSAPDIANEDKAN).

It belongs to the isocitrate and isopropylmalate dehydrogenases family. LeuB type 1 subfamily. As to quaternary structure, homodimer. Requires Mg(2+) as cofactor. It depends on Mn(2+) as a cofactor.

The protein localises to the cytoplasm. The catalysed reaction is (2R,3S)-3-isopropylmalate + NAD(+) = 4-methyl-2-oxopentanoate + CO2 + NADH. It participates in amino-acid biosynthesis; L-leucine biosynthesis; L-leucine from 3-methyl-2-oxobutanoate: step 3/4. Functionally, catalyzes the oxidation of 3-carboxy-2-hydroxy-4-methylpentanoate (3-isopropylmalate) to 3-carboxy-4-methyl-2-oxopentanoate. The product decarboxylates to 4-methyl-2 oxopentanoate. The chain is 3-isopropylmalate dehydrogenase from Staphylococcus epidermidis (strain ATCC 35984 / DSM 28319 / BCRC 17069 / CCUG 31568 / BM 3577 / RP62A).